An 892-amino-acid polypeptide reads, in one-letter code: Isoleucine--tRNA ligase (892 aa).

The 'HIGH' region motif lies at 60–70 (PYANGSIHIGH). E552 provides a ligand contact to L-isoleucyl-5'-AMP. The short motif at 593-597 (KMSKS) is the 'KMSKS' region element. Residue K596 participates in ATP binding. 4 residues coordinate Zn(2+): C862, C865, C879, and C882.

Belongs to the class-I aminoacyl-tRNA synthetase family. IleS type 1 subfamily. In terms of assembly, monomer. It depends on Zn(2+) as a cofactor.

It is found in the cytoplasm. It catalyses the reaction tRNA(Ile) + L-isoleucine + ATP = L-isoleucyl-tRNA(Ile) + AMP + diphosphate. In terms of biological role, catalyzes the attachment of isoleucine to tRNA(Ile). As IleRS can inadvertently accommodate and process structurally similar amino acids such as valine, to avoid such errors it has two additional distinct tRNA(Ile)-dependent editing activities. One activity is designated as 'pretransfer' editing and involves the hydrolysis of activated Val-AMP. The other activity is designated 'posttransfer' editing and involves deacylation of mischarged Val-tRNA(Ile). This Mycoplasmopsis agalactiae (strain NCTC 10123 / CIP 59.7 / PG2) (Mycoplasma agalactiae) protein is Isoleucine--tRNA ligase.